Reading from the N-terminus, the 527-residue chain is 4-alpha-glucanotransferase (527 aa).

This sequence belongs to the disproportionating enzyme family.

Its subcellular location is the cytoplasm. The enzyme catalyses Transfers a segment of a (1-&gt;4)-alpha-D-glucan to a new position in an acceptor, which may be glucose or a (1-&gt;4)-alpha-D-glucan.. This Chlamydia trachomatis serovar D (strain ATCC VR-885 / DSM 19411 / UW-3/Cx) protein is 4-alpha-glucanotransferase (malQ).